Here is a 178-residue protein sequence, read N- to C-terminus: Large ribosomal subunit protein uL6 (178 aa).

Belongs to the universal ribosomal protein uL6 family. Part of the 50S ribosomal subunit.

Its function is as follows. This protein binds to the 23S rRNA, and is important in its secondary structure. It is located near the subunit interface in the base of the L7/L12 stalk, and near the tRNA binding site of the peptidyltransferase center. The chain is Large ribosomal subunit protein uL6 from Desulfatibacillum aliphaticivorans.